The chain runs to 413 residues: DNA polymerase IV 1 (413 aa).

Positions Ile-7–Gly-188 constitute a UmuC domain. Positions 11 and 107 each coordinate Mg(2+). Residue Glu-108 is part of the active site.

This sequence belongs to the DNA polymerase type-Y family. Monomer. It depends on Mg(2+) as a cofactor.

Its subcellular location is the cytoplasm. It catalyses the reaction DNA(n) + a 2'-deoxyribonucleoside 5'-triphosphate = DNA(n+1) + diphosphate. Functionally, poorly processive, error-prone DNA polymerase involved in untargeted mutagenesis. Copies undamaged DNA at stalled replication forks, which arise in vivo from mismatched or misaligned primer ends. These misaligned primers can be extended by PolIV. Exhibits no 3'-5' exonuclease (proofreading) activity. May be involved in translesional synthesis, in conjunction with the beta clamp from PolIII. The protein is DNA polymerase IV 1 (dinB1) of Halalkalibacterium halodurans (strain ATCC BAA-125 / DSM 18197 / FERM 7344 / JCM 9153 / C-125) (Bacillus halodurans).